The following is an 89-amino-acid chain: Small ribosomal subunit protein uS15 (89 aa).

Belongs to the universal ribosomal protein uS15 family. In terms of assembly, part of the 30S ribosomal subunit. Forms a bridge to the 50S subunit in the 70S ribosome, contacting the 23S rRNA.

In terms of biological role, one of the primary rRNA binding proteins, it binds directly to 16S rRNA where it helps nucleate assembly of the platform of the 30S subunit by binding and bridging several RNA helices of the 16S rRNA. Functionally, forms an intersubunit bridge (bridge B4) with the 23S rRNA of the 50S subunit in the ribosome. This Shewanella baltica (strain OS185) protein is Small ribosomal subunit protein uS15.